Here is a 208-residue protein sequence, read N- to C-terminus: Imidazole glycerol phosphate synthase subunit HisH (208 aa).

The Glutamine amidotransferase type-1 domain maps to 1–206 (MIVIVDYDTG…KEMTEDEALS (206 aa)). The active-site Nucleophile is cysteine 79. Catalysis depends on residues histidine 181 and glutamate 183.

In terms of assembly, heterodimer of HisH and HisF.

The protein localises to the cytoplasm. The catalysed reaction is 5-[(5-phospho-1-deoxy-D-ribulos-1-ylimino)methylamino]-1-(5-phospho-beta-D-ribosyl)imidazole-4-carboxamide + L-glutamine = D-erythro-1-(imidazol-4-yl)glycerol 3-phosphate + 5-amino-1-(5-phospho-beta-D-ribosyl)imidazole-4-carboxamide + L-glutamate + H(+). It carries out the reaction L-glutamine + H2O = L-glutamate + NH4(+). Its pathway is amino-acid biosynthesis; L-histidine biosynthesis; L-histidine from 5-phospho-alpha-D-ribose 1-diphosphate: step 5/9. In terms of biological role, IGPS catalyzes the conversion of PRFAR and glutamine to IGP, AICAR and glutamate. The HisH subunit catalyzes the hydrolysis of glutamine to glutamate and ammonia as part of the synthesis of IGP and AICAR. The resulting ammonia molecule is channeled to the active site of HisF. This is Imidazole glycerol phosphate synthase subunit HisH from Lacticaseibacillus casei (strain BL23) (Lactobacillus casei).